The primary structure comprises 459 residues: Cysteine--tRNA ligase (459 aa).

Cys-28 is a binding site for Zn(2+). Residues 30–40 carry the 'HIGH' region motif; sequence VTIYDLCHIGH. Residues Cys-209, His-234, and Glu-238 each contribute to the Zn(2+) site. Residues 266-270 carry the 'KMSKS' region motif; sequence KMSKS. Position 269 (Lys-269) interacts with ATP.

The protein belongs to the class-I aminoacyl-tRNA synthetase family. Monomer. It depends on Zn(2+) as a cofactor.

It localises to the cytoplasm. It catalyses the reaction tRNA(Cys) + L-cysteine + ATP = L-cysteinyl-tRNA(Cys) + AMP + diphosphate. The sequence is that of Cysteine--tRNA ligase from Shewanella amazonensis (strain ATCC BAA-1098 / SB2B).